Reading from the N-terminus, the 398-residue chain is 1-deoxy-D-xylulose 5-phosphate reductoisomerase (398 aa).

NADPH contacts are provided by Thr14, Gly15, Ser16, Ile17, Gln42, and Asn128. Lys129 serves as a coordination point for 1-deoxy-D-xylulose 5-phosphate. Glu130 serves as a coordination point for NADPH. Position 154 (Asp154) interacts with Mn(2+). Residues Ser155, Glu156, Ser185, and His208 each contribute to the 1-deoxy-D-xylulose 5-phosphate site. Position 156 (Glu156) interacts with Mn(2+). Residue Gly214 participates in NADPH binding. Positions 221, 226, 227, and 230 each coordinate 1-deoxy-D-xylulose 5-phosphate. Glu230 lines the Mn(2+) pocket.

Belongs to the DXR family. It depends on Mg(2+) as a cofactor. Requires Mn(2+) as cofactor.

It carries out the reaction 2-C-methyl-D-erythritol 4-phosphate + NADP(+) = 1-deoxy-D-xylulose 5-phosphate + NADPH + H(+). It participates in isoprenoid biosynthesis; isopentenyl diphosphate biosynthesis via DXP pathway; isopentenyl diphosphate from 1-deoxy-D-xylulose 5-phosphate: step 1/6. Its function is as follows. Catalyzes the NADPH-dependent rearrangement and reduction of 1-deoxy-D-xylulose-5-phosphate (DXP) to 2-C-methyl-D-erythritol 4-phosphate (MEP). This is 1-deoxy-D-xylulose 5-phosphate reductoisomerase from Dechloromonas aromatica (strain RCB).